A 549-amino-acid chain; its full sequence is Adhesion G protein-coupled receptor G3 (549 aa).

The N-terminal stretch at 1–20 is a signal peptide; that stretch reads MATPRGLGALLLLLLLPTSG. Topologically, residues 21–270 are extracellular; it reads QEKPTEGPRN…DQSTVHILTR (250 aa). Asn98, Asn144, and Asn210 each carry an N-linked (GlcNAc...) asparagine glycan. Residues 107–262 enclose the GAIN-B domain; that stretch reads FYFSLEPSQV…ALLLRPTLDQ (156 aa). Cystine bridges form between Cys215/Cys244 and Cys233/Cys246. Residues 215-262 are GPS; it reads CVFWDVTKGTTGDWSSEGCSTEVRPEGTVCCCDHLTFFALLLRPTLDQ. The interval 251–259 is stachel; that stretch reads FFALLLRPT. The helical transmembrane segment at 271–295 threads the bilayer; that stretch reads ISQAGCGVSMIFLAFTIILYAFLRL. The Cytoplasmic segment spans residues 296–304; sequence SRERFKSED. Residues 305 to 326 form a helical membrane-spanning segment; sequence APKIHVALGGSLFLLNLAFLVN. Residues 327-338 are Extracellular-facing; the sequence is VGSGSKGSDAAC. A disulfide bond links Cys338 and Cys420. Residues 339 to 364 form a helical membrane-spanning segment; the sequence is WARGAVFHYFLLCAFTWMGLEAFHLY. Over 365–378 the chain is Cytoplasmic; sequence LLAVRVFNTYFGHY. The chain crosses the membrane as a helical span at residues 379-400; sequence FLKLSLVGWGLPALMVIGTGSA. Over 401 to 428 the chain is Extracellular; sequence NSYGLYTIRDRENRTSLELCWFREGTTM. The N-linked (GlcNAc...) asparagine glycan is linked to Asn413. A helical transmembrane segment spans residues 429–454; sequence YALYITVHGYFLITFLFGMVVLALVV. Residues 455-474 are Cytoplasmic-facing; the sequence is WKIFTLSRATAVKERGKNRK. A helical membrane pass occupies residues 475 to 495; it reads KVLTLLGLSSLVGVTWGLAIF. At 496–501 the chain is on the extracellular side; that stretch reads TPLGLS. Residues 502 to 525 traverse the membrane as a helical segment; it reads TVYIFALFNSLQGVFICCWFTILY. Residue Asn510 coordinates cortisol. Residues 526 to 549 are Cytoplasmic-facing; the sequence is LPSQSTTVSSSTARLDQAHSASQE.

This sequence belongs to the G-protein coupled receptor 2 family. Adhesion G-protein coupled receptor (ADGR) subfamily. Heterodimer of 2 chains generated by proteolytic processing; the large extracellular N-terminal fragment and the membrane-bound C-terminal fragment predominantly remain associated and non-covalently linked. Interacts with PRTN3; this interaction induces the activation of PAR2. Interacts with GNAO1 (when palmitoylated). Post-translationally, autoproteolytically processed at the GPS region of the GAIN-B domain; this cleavage modulates receptor activity. O- and N-glycosylated. Expressed in cultured primary dermal lymphatic endothelial cells. Highly expressed in polymorphonuclear cells (PMNs) including neutrophilic, eosinophilic, and basophilic granulocytes.

It is found in the cell membrane. Its activity is regulated as follows. Forms a heterodimer of 2 chains generated by proteolytic processing that remain associated through non-covalent interactions mediated by the GAIN-B domain. In the inactivated receptor, the Stachel sequence (also named stalk) is embedded in the GAIN-B domain, where it adopts a beta-strand conformation. On activation, the Stachel moves into the 7 transmembrane region and adopts a twisted hook-shaped configuration that forms contacts within the receptor, leading to coupling of a G-alpha protein, which activates signaling. The cleaved GAIN-B and N-terminal domains can then dissociate from the rest of the receptor. Its function is as follows. Adhesion G-protein coupled receptor (aGPCR) for glucocorticoid hormones such as cortisol, cortisone and 11-deoxycortisol. Ligand binding causes a conformation change that triggers signaling via guanine nucleotide-binding proteins (G proteins) and modulates the activity of downstream effectors, such as adenylate cyclase. ADGRG3/GPR97 is coupled to G(o)/GNAO1 G proteins and mediates signaling by inhibiting adenylate cyclase activity. May also signal through G-alpha(q)-proteins; additional evidence are however required to confirm this result in vivo. Plays a role in the regulation of various processes including B-cell development, inflammation or innate immunity. Regulates migration of lymphatic endothelial cells in vitro via the small GTPases RhoA and CDC42. Antibody ligation leads to the production and activation of antimicrobial mediators like reactive oxygen species (ROS) and myeloperoxidase (MPO) as well as enhanced bacteria uptake and killing by granulocytes. Additionally, collaborates with protease-activated receptor 2/PAR2 to stimulate neutrophil-driven antimicrobial responses and endothelial cell activation. The chain is Adhesion G protein-coupled receptor G3 from Homo sapiens (Human).